A 151-amino-acid polypeptide reads, in one-letter code: D-aminoacyl-tRNA deacylase (151 aa).

A Gly-cisPro motif, important for rejection of L-amino acids motif is present at residues 137–138; it reads GP.

It belongs to the DTD family. Homodimer.

It is found in the cytoplasm. It catalyses the reaction glycyl-tRNA(Ala) + H2O = tRNA(Ala) + glycine + H(+). The enzyme catalyses a D-aminoacyl-tRNA + H2O = a tRNA + a D-alpha-amino acid + H(+). Functionally, an aminoacyl-tRNA editing enzyme that deacylates mischarged D-aminoacyl-tRNAs. Also deacylates mischarged glycyl-tRNA(Ala), protecting cells against glycine mischarging by AlaRS. Acts via tRNA-based rather than protein-based catalysis; rejects L-amino acids rather than detecting D-amino acids in the active site. By recycling D-aminoacyl-tRNA to D-amino acids and free tRNA molecules, this enzyme counteracts the toxicity associated with the formation of D-aminoacyl-tRNA entities in vivo and helps enforce protein L-homochirality. The chain is D-aminoacyl-tRNA deacylase from Acaryochloris marina (strain MBIC 11017).